Here is a 519-residue protein sequence, read N- to C-terminus: uncharacterized protein (519 aa).

Transmembrane regions (helical) follow at residues 52 to 72 (IYFL…VRGS), 86 to 106 (LATY…SPIV), 119 to 139 (TWVV…SYNV), 156 to 176 (WSFL…GWSL), 199 to 219 (FFLS…NTFI), 231 to 251 (LSGY…LVCF), 313 to 333 (MLSL…VYTG), 343 to 363 (IWLK…ILVY), 374 to 394 (VFFP…IQFV), 408 to 430 (IGGT…PQYV), and 477 to 497 (TSIV…TPVV).

The protein resides in the membrane. This is an uncharacterized protein from Schizosaccharomyces pombe (strain 972 / ATCC 24843) (Fission yeast).